A 548-amino-acid chain; its full sequence is Synaptic vesicle 2-related protein (548 aa).

Topologically, residues 1 to 87 (MEEDLFQLRQ…GFGKFQWKLS (87 aa)) are cytoplasmic. A phosphoserine mark is found at Ser25 and Ser31. Residues 88–108 (VLTGLAWMADAMEMMILSILA) traverse the membrane as a helical segment. Residues 109–122 (PQLHCEWRLPSWQV) lie on the Vesicular side of the membrane. Residues 123 to 143 (ALLTSVVFVGMMSSSTLWGNI) form a helical membrane-spanning segment. Residues 144-156 (SDQYGRKTGLKIS) are Cytoplasmic-facing. A helical transmembrane segment spans residues 157–177 (VLWTLYYGILSAFAPVYSWIL). The Vesicular segment spans residues 178–180 (VLR). Residues 181 to 201 (GLVGFGIGGVPQSVTLYAEFL) form a helical membrane-spanning segment. Residues 202–209 (PMKARAKC) lie on the Cytoplasmic side of the membrane. Residues 210–230 (ILLIEVFWAIGTVFEVVLAVF) traverse the membrane as a helical segment. Topologically, residues 231–238 (VMPSLGWR) are vesicular. Residues 239–259 (WLLILSAVPLLLFAVLCFWLP) traverse the membrane as a helical segment. Residues 260 to 316 (ESARYDVLSGNQEKAIATLKRIATENGAPMPLGKLIISRQEDRGKMRDLFTPHFRWT) lie on the Cytoplasmic side of the membrane. Residues 317–337 (TLLLWFIWFSNAFSYYGLVLL) form a helical membrane-spanning segment. Residues 338–373 (TTELFQAGDVCSISSRKKAVEAKCSLACEYLSEEDY) lie on the Vesicular side of the membrane. A helical membrane pass occupies residues 374–394 (MDLLWTTLSEFPGVLVTLWII). Residues 395-401 (DRLGRKK) are Cytoplasmic-facing. The chain crosses the membrane as a helical span at residues 402-422 (TMALCFVVFSFCSLLLFICVG). The Vesicular segment spans residues 423 to 425 (RNM). The chain crosses the membrane as a helical span at residues 426–446 (LTLLLFIARAFISGGFQAAYV). Residues 447-457 (YTPEVYPTATR) are Cytoplasmic-facing. Residues 458-478 (ALGLGTCSGMARVGALITPFI) form a helical membrane-spanning segment. Residues 479-489 (AQVMLESSVYL) lie on the Vesicular side of the membrane. Residues 490–510 (TLAVYSGCCLLAALASCFLPI) form a helical membrane-spanning segment. Over 511–548 (ETKGRGLQESSHREWGQEMVGRGAHGTGVARSNSGSQE) the chain is Cytoplasmic. The disordered stretch occupies residues 528–548 (EMVGRGAHGTGVARSNSGSQE). Ser542 bears the Phosphoserine mark.

Belongs to the major facilitator superfamily. Detected in brain and adrenal medulla.

Its subcellular location is the cytoplasmic vesicle. It is found in the secretory vesicle. The protein localises to the synaptic vesicle membrane. In Bos taurus (Bovine), this protein is Synaptic vesicle 2-related protein (SVOP).